The chain runs to 212 residues: Deoxyribose-phosphate aldolase (212 aa).

The active-site Proton donor/acceptor is the Asp-89. Lys-151 functions as the Schiff-base intermediate with acetaldehyde in the catalytic mechanism. Catalysis depends on Lys-180, which acts as the Proton donor/acceptor.

It belongs to the DeoC/FbaB aldolase family. DeoC type 1 subfamily.

The protein localises to the cytoplasm. The enzyme catalyses 2-deoxy-D-ribose 5-phosphate = D-glyceraldehyde 3-phosphate + acetaldehyde. Its pathway is carbohydrate degradation; 2-deoxy-D-ribose 1-phosphate degradation; D-glyceraldehyde 3-phosphate and acetaldehyde from 2-deoxy-alpha-D-ribose 1-phosphate: step 2/2. Its function is as follows. Catalyzes a reversible aldol reaction between acetaldehyde and D-glyceraldehyde 3-phosphate to generate 2-deoxy-D-ribose 5-phosphate. This Clostridium botulinum (strain Loch Maree / Type A3) protein is Deoxyribose-phosphate aldolase.